A 446-amino-acid polypeptide reads, in one-letter code: Packaging protein 1 (446 aa).

Positions Met-1–Phe-10 are enriched in basic residues. The segment at Met-1 to Leu-74 is disordered. An ATP-binding site is contributed by Gly-170–Ser-177. Residues Arg-439 to Lys-446 are DNA-binding.

The protein belongs to the adenoviridae packaging protein 1 family. As to quaternary structure, homodimer. Part of a genome packaging complex composed of packaging proteins 1, 2 and 3; this complex specifically binds to the packaging sequence on the left end of viral genomic DNA and performs packaging of the viral genome. Interacts with protein 33K.

It localises to the virion. It is found in the host nucleus. The protein resides in the host nucleoplasm. The protein localises to the host nucleolus. Component of the packaging machinery which encapsidates the viral DNA into preformed capsids and transcriptional activator of the viral major late promoter (MLP). Binds, along with packaging proteins 2 and 3, to the specific packaging sequence on the left end of viral genomic DNA and displays ATPase activity thereby providing the power stroke of the packaging machinery. The activity of packaging protein IVa2 is stimulated by protein 33K which acts as a terminase. May be the protein that pumps DNA into the capsid powered by ATP hydrolysis. Specifically binds to the 5'-CG-3' nucleotides of the repeats making up the packaging sequence. Component of the DEF-A and DEF-B transcription factors that bind downstream elements of the major late promoter (MLP), and stimulate transcription from the MLP after initiation of viral DNA replication. DEF-A is a heterodimer packaging proteins 1 and 2 and DEF-B is a homodimer of packaging protein 1. This is Packaging protein 1 from Human adenovirus F serotype 40 (HAdV-40).